Here is a 315-residue protein sequence, read N- to C-terminus: Methionyl-tRNA formyltransferase (315 aa).

Residues 2–189 (SESLRIIFAG…LITTLKQLAD (188 aa)) are N-terminal domain. Residue 113-116 (SLLP) coordinates (6S)-5,6,7,8-tetrahydrofolate. Residues 210-315 (KEEARIDWSL…EWFVPGNRLV (106 aa)) form a C-terminal domain region.

This sequence belongs to the Fmt family. Monomer.

It catalyses the reaction L-methionyl-tRNA(fMet) + (6R)-10-formyltetrahydrofolate = N-formyl-L-methionyl-tRNA(fMet) + (6S)-5,6,7,8-tetrahydrofolate + H(+). With respect to regulation, activity is optimum in the presence of Mg(2+) and K(+). Attaches a formyl group to the free amino group of methionyl-tRNA(fMet). The formyl group appears to play a dual role in the initiator identity of N-formylmethionyl-tRNA by promoting its recognition by IF2 and preventing the misappropriation of this tRNA by the elongation apparatus. The polypeptide is Methionyl-tRNA formyltransferase (Escherichia coli (strain K12)).